Reading from the N-terminus, the 155-residue chain is Interleukin-2 (155 aa).

Positions 1–20 are cleaved as a signal peptide; it reads MYSMQLASCVALTLVLLVNS. O-linked (GalNAc...) threonine glycosylation occurs at T23. A disulfide bridge connects residues C78 and C126.

Belongs to the IL-2 family.

The protein localises to the secreted. Its function is as follows. Cytokine produced by activated CD4-positive helper T-cells and to a lesser extend activated CD8-positive T-cells and natural killer (NK) cells that plays pivotal roles in the immune response and tolerance. Binds to a receptor complex composed of either the high-affinity trimeric IL-2R (IL2RA/CD25, IL2RB/CD122 and IL2RG/CD132) or the low-affinity dimeric IL-2R (IL2RB and IL2RG). Interaction with the receptor leads to oligomerization and conformation changes in the IL-2R subunits resulting in downstream signaling starting with phosphorylation of JAK1 and JAK3. In turn, JAK1 and JAK3 phosphorylate the receptor to form a docking site leading to the phosphorylation of several substrates including STAT5. This process leads to activation of several pathways including STAT, phosphoinositide-3-kinase/PI3K and mitogen-activated protein kinase/MAPK pathways. Functions as a T-cell growth factor and can increase NK-cell cytolytic activity as well. Promotes strong proliferation of activated B-cells and subsequently immunoglobulin production. Plays a pivotal role in regulating the adaptive immune system by controlling the survival and proliferation of regulatory T-cells, which are required for the maintenance of immune tolerance. Moreover, participates in the differentiation and homeostasis of effector T-cell subsets, including Th1, Th2, Th17 as well as memory CD8-positive T-cells. This chain is Interleukin-2 (Il2), found in Rattus norvegicus (Rat).